A 421-amino-acid chain; its full sequence is Testin (421 aa).

The region spanning 92 to 199 (MILTNPVAAR…GDVKLPCELD (108 aa)) is the PET domain. The disordered stretch occupies residues 134–164 (KQPVAGSEGAQYRKKQLAKQLPAHDQDPSKC). Basic and acidic residues predominate over residues 155–164 (PAHDQDPSKC). LIM zinc-binding domains are found at residues 234–297 (YSCY…CDSE), 299–359 (PRCA…NHAV), and 362–421 (QGCH…KMMS).

Belongs to the prickle / espinas / testin family. As to quaternary structure, interacts via LIM domain 1 with ZYX. Interacts (via LIM domain 3) with ENAH and VASP. Interacts with ALKBH4, talin, actin, alpha-actinin, GRIP1 and PXN. Interacts (via LIM domain 2) with ACTL7A (via N-terminus). Heterodimer with ACTL7A; the heterodimer interacts with ENAH to form a heterotrimer.

The protein resides in the cytoplasm. It localises to the cell junction. Its subcellular location is the focal adhesion. Functionally, scaffold protein that may play a role in cell adhesion, cell spreading and in the reorganization of the actin cytoskeleton. Plays a role in the regulation of cell proliferation. May act as a tumor suppressor. The sequence is that of Testin (TES) from Eulemur macaco macaco (Black lemur).